Here is a 446-residue protein sequence, read N- to C-terminus: Kynurenine 3-monooxygenase (446 aa).

Belongs to the aromatic-ring hydroxylase family. KMO subfamily. It depends on FAD as a cofactor.

The catalysed reaction is L-kynurenine + NADPH + O2 + H(+) = 3-hydroxy-L-kynurenine + NADP(+) + H2O. It participates in cofactor biosynthesis; NAD(+) biosynthesis; quinolinate from L-kynurenine: step 1/3. Its function is as follows. Catalyzes the hydroxylation of L-kynurenine (L-Kyn) to form 3-hydroxy-L-kynurenine (L-3OHKyn). Required for synthesis of quinolinic acid. In Flavobacterium johnsoniae (strain ATCC 17061 / DSM 2064 / JCM 8514 / BCRC 14874 / CCUG 350202 / NBRC 14942 / NCIMB 11054 / UW101) (Cytophaga johnsonae), this protein is Kynurenine 3-monooxygenase.